Reading from the N-terminus, the 495-residue chain is Rho GTPase-activating protein 19 (495 aa).

A Rho-GAP domain is found at 98–304 (MSLKRKEKGV…FMIKHSQKLF (207 aa)). 2 disordered regions span residues 327–362 (KDDL…ETQQ) and 393–495 (KHPS…SSSL). 3 stretches are compositionally biased toward basic and acidic residues: residues 350–362 (SRLD…ETQQ), 433–452 (QERK…KENV), and 470–481 (KSLEGQKEESCR).

Functionally, GTPase activator for the Rho-type GTPases by converting them to an inactive GDP-bound state. The polypeptide is Rho GTPase-activating protein 19 (ARHGAP19) (Gallus gallus (Chicken)).